The primary structure comprises 219 residues: MEKLIVGILFLSVLSGSVAQTDMKGKAFIFPQESSTAYVSLIPKVRKSLQNFTLCMKAFTDLTRPYSIFSYNTRTKDNEILLFVENIGEYMFYVGNLVAIFKAPTNLPDPVRICVNWESVSGIAEFWLNGKPLGRKGLNKGYTVGGDAMIIIGQEQDSFGGNFDAKQSFVGEIWDVSLWDHVVPLEKVSDSCNNGNLINWQALNYEDNGYVVIKPKLWP.

An N-terminal signal peptide occupies residues 1-19; it reads MEKLIVGILFLSVLSGSVA. Positions 24–219 constitute a Pentraxin (PTX) domain; sequence KGKAFIFPQE…YVVIKPKLWP (196 aa). Asparagine 51 carries N-linked (GlcNAc...) asparagine glycosylation. A disulfide bridge connects residues cysteine 55 and cysteine 114. Ca(2+) is bound by residues aspartate 77, asparagine 78, glutamate 155, glutamine 156, aspartate 157, and glutamine 167.

Belongs to the pentraxin family. Homopentamer. Pentraxin (or pentaxin) have a discoid arrangement of 5 non-covalently bound subunits. It depends on Ca(2+) as a cofactor. Expressed in colon.

It localises to the secreted. The chain is Mucosal pentraxin (Mptx1) from Mus musculus (Mouse).